Reading from the N-terminus, the 280-residue chain is Urease accessory protein UreD 1 (280 aa).

It belongs to the UreD family. As to quaternary structure, ureD, UreF and UreG form a complex that acts as a GTP-hydrolysis-dependent molecular chaperone, activating the urease apoprotein by helping to assemble the nickel containing metallocenter of UreC. The UreE protein probably delivers the nickel.

Its subcellular location is the cytoplasm. In terms of biological role, required for maturation of urease via the functional incorporation of the urease nickel metallocenter. The chain is Urease accessory protein UreD 1 from Brucella abortus biovar 1 (strain 9-941).